The following is a 148-amino-acid chain: HTH-type transcriptional regulator Rv2324 (148 aa).

The 62-residue stretch at 4 to 65 (LDDTDERILA…VVDRNALGWN (62 aa)) folds into the HTH asnC-type domain. Residues 23-42 (FAEIGHKVSLSAPAVKRRVD) constitute a DNA-binding region (H-T-H motif).

As to quaternary structure, homodimer. Forms oligomers.

Its activity is regulated as follows. The DNA-binding activity of Rv2324 is modulated by interaction of Rv2324 with amino acids. Aspartate is the only effector amino acid that completely abolishes DNA binding. The majority of amino acids induce a dimer-tetramer or dimer-hexamer oligomeric transition. In response to amino-acid binding, adopts an open quaternary association, which is a part of the functional requirement to bind to non-symmetrically distributed target DNA binding sites. In terms of biological role, transcriptional regulator involved in growth, DNA replication and damage control. Plays a crucial role in regulating survival and growth of M.tuberculosis. Could function as a global regulator in both the latent/persistent and active phases of growth. Binds to its own promoter region and to promoters of multiple metabolic genes, such as serB2, lat, ald and roc operon. In vitro, interacts with intrinsically curved and non-curved DNA molecules, and with both supercoiled and linear DNA, with higher affinity for supercoiled DNA. Binds to DNA recombination, replication and repair intermediates. The sequence is that of HTH-type transcriptional regulator Rv2324 from Mycobacterium tuberculosis (strain ATCC 25618 / H37Rv).